Here is a 373-residue protein sequence, read N- to C-terminus: Exonuclease V (373 aa).

A [4Fe-4S] cluster-binding site is contributed by Cys92. Residues Asp182 and Glu196 each coordinate Mg(2+). Cys343, Cys346, and Cys352 together coordinate [4Fe-4S] cluster.

This sequence belongs to the EXO5 family. In terms of assembly, monomer; monomeric form has weak exonuclease activity. Homodimer; homodimeric form is unsure but has much higher exonuclease activity, suggesting that it could homodimerize upon DNA-binding. Interacts with the replication protein A (RPA) complex. [4Fe-4S] cluster is required as a cofactor. It depends on Mg(2+) as a cofactor.

The protein localises to the nucleus. Its subcellular location is the cytoplasm. The protein resides in the cytosol. Single-stranded DNA (ssDNA) bidirectional exonuclease involved in DNA repair. Probably involved in DNA repair following ultraviolet (UV) irradiation and interstrand cross-links (ICLs) damage. Has both 5'-3' and 3'-5' exonuclease activities with a strong preference for 5'-ends. Acts as a sliding exonuclease that loads at ssDNA ends and then slides along the ssDNA prior to cutting; however the sliding and the 3'-5' exonuclease activities are abolished upon binding to the replication protein A (RPA) complex that enforces 5'-directionality activity. The protein is Exonuclease V (EXO5) of Homo sapiens (Human).